A 347-amino-acid polypeptide reads, in one-letter code: Phenylalanine--tRNA ligase alpha subunit (347 aa).

Residue Glu-261 coordinates Mg(2+).

This sequence belongs to the class-II aminoacyl-tRNA synthetase family. Phe-tRNA synthetase alpha subunit type 1 subfamily. In terms of assembly, tetramer of two alpha and two beta subunits. Mg(2+) is required as a cofactor.

Its subcellular location is the cytoplasm. The catalysed reaction is tRNA(Phe) + L-phenylalanine + ATP = L-phenylalanyl-tRNA(Phe) + AMP + diphosphate + H(+). The protein is Phenylalanine--tRNA ligase alpha subunit of Streptococcus thermophilus (strain CNRZ 1066).